The following is a 139-amino-acid chain: ATP synthase epsilon chain 2 (139 aa).

Belongs to the ATPase epsilon chain family. In terms of assembly, F-type ATPases have 2 components, CF(1) - the catalytic core - and CF(0) - the membrane proton channel. CF(1) has five subunits: alpha(3), beta(3), gamma(1), delta(1), epsilon(1). CF(0) has three main subunits: a, b and c.

It is found in the cell inner membrane. Functionally, produces ATP from ADP in the presence of a proton gradient across the membrane. This Ralstonia nicotianae (strain ATCC BAA-1114 / GMI1000) (Ralstonia solanacearum) protein is ATP synthase epsilon chain 2 (atpC2).